A 305-amino-acid polypeptide reads, in one-letter code: uncharacterized protein (305 aa).

The region spanning 5–233 (LELKNVTKNI…ENDTYFFQVE (229 aa)) is the ABC transporter domain. An ATP-binding site is contributed by 37-44 (GPNGAGKT).

The protein belongs to the ABC transporter superfamily.

This is an uncharacterized protein from Bacillus subtilis (strain 168).